Reading from the N-terminus, the 510-residue chain is Aspartate kinase FUB3 (510 aa).

ACT domains are found at residues 372-440 (ILSN…VLPD) and 446-510 (LVGA…KNAM).

It belongs to the aspartokinase family.

It catalyses the reaction L-aspartate + ATP = 4-phospho-L-aspartate + ADP. Its pathway is mycotoxin biosynthesis. Aspartate kinase; part of the gene cluster that mediates the biosynthesis of fusaric acid, a mycotoxin with low to moderate toxicity to animals and humans, but with high phytotoxic properties. L-aspartate is suggested as fusaric acid amino acid precursor that is activated and further processed to O-acetyl-L-homoserine by cluster enzymes aspartate kinase FUB3 and homoserine O-acetyltransferase FUB5, as well as enzymes of the primary metabolism. The polyketide synthase (PKS) FUB1 generates the triketide trans-2-hexenal which is presumptively released by the hydrolase FUB4 and linked to the NRPS-bound amino acid precursor by NAD(P)-dependent dehydrogenase FUB6. FUB1, FUB4, and the non-canonical NRPS Fub8 may form an enzyme complex. Further processing of the NRPS-bound intermediate might be carried out by FUB6 and the sulfhydrylase FUB7, enabling a spontaneous electrocyclization to close the carbon backbone of fusaric acid. Dihydrofusaric acid is likely to be released via reduction by the thioester reductase (TR) domain of FUB8 whereupon the final oxidation to fusaric acid may (also) be performed by the FMN-dependent dehydrogenase FUB9. The protein is Aspartate kinase FUB3 of Gibberella moniliformis (strain M3125 / FGSC 7600) (Maize ear and stalk rot fungus).